Here is a 76-residue protein sequence, read N- to C-terminus: Large ribosomal subunit protein bL31 (76 aa).

It belongs to the bacterial ribosomal protein bL31 family. Type A subfamily. As to quaternary structure, part of the 50S ribosomal subunit.

Its function is as follows. Binds the 23S rRNA. This chain is Large ribosomal subunit protein bL31, found in Gluconacetobacter diazotrophicus (strain ATCC 49037 / DSM 5601 / CCUG 37298 / CIP 103539 / LMG 7603 / PAl5).